A 308-amino-acid chain; its full sequence is Olfactory receptor 4N5 (308 aa).

At 1-25 (METQNLTVVTEFILLGLTQSQDAQL) the chain is on the extracellular side. N5 is a glycosylation site (N-linked (GlcNAc...) asparagine). Residues 26–49 (LVFVLVLIFYLIILPGNFLIIFTI) traverse the membrane as a helical segment. Residues 50-57 (KSDPGLTA) lie on the Cytoplasmic side of the membrane. The helical transmembrane segment at 58 to 79 (PLYFFLGNLALLDASYSFIVVP) threads the bilayer. Residues 80-100 (RMLVDFLSEKKVISYRSCITQ) lie on the Extracellular side of the membrane. C97 and C189 form a disulfide bridge. Residues 101–120 (LFFLHFLGAGEMFLLVVMAF) traverse the membrane as a helical segment. Residues 121–139 (DRYIAICRPLHYSTIMNPR) are Cytoplasmic-facing. Residues 140–158 (ACYALSLVLWLGGFIHSIV) form a helical membrane-spanning segment. Topologically, residues 159–195 (QVALILHLPFCGPNQLDNFFCDVPQVIKLACTNTFVV) are extracellular. Residues 196-219 (ELLMVSNSGLLSLLCFLGLLASYA) form a helical membrane-spanning segment. Residues 220–235 (VILCRIREHSSEGKSK) lie on the Cytoplasmic side of the membrane. The chain crosses the membrane as a helical span at residues 236–258 (AISTCTTHIIIIFLMFGPAIFIY). Topologically, residues 259–269 (TCPFQAFPADK) are extracellular. The chain crosses the membrane as a helical span at residues 270-289 (VVSLFHTVIFPLMNPVIYTL). At 290-308 (RNQEVKASMRKLLSQHMFC) the chain is on the cytoplasmic side.

Belongs to the G-protein coupled receptor 1 family.

The protein localises to the cell membrane. Its function is as follows. Odorant receptor. In Homo sapiens (Human), this protein is Olfactory receptor 4N5 (OR4N5).